We begin with the raw amino-acid sequence, 338 residues long: Tetraacyldisaccharide 4'-kinase (338 aa).

Residue 67 to 74 (IAGGAGKT) participates in ATP binding.

This sequence belongs to the LpxK family.

It catalyses the reaction a lipid A disaccharide + ATP = a lipid IVA + ADP + H(+). Its pathway is glycolipid biosynthesis; lipid IV(A) biosynthesis; lipid IV(A) from (3R)-3-hydroxytetradecanoyl-[acyl-carrier-protein] and UDP-N-acetyl-alpha-D-glucosamine: step 6/6. In terms of biological role, transfers the gamma-phosphate of ATP to the 4'-position of a tetraacyldisaccharide 1-phosphate intermediate (termed DS-1-P) to form tetraacyldisaccharide 1,4'-bis-phosphate (lipid IVA). The chain is Tetraacyldisaccharide 4'-kinase from Acidovorax sp. (strain JS42).